Consider the following 641-residue polypeptide: Soluble starch synthase 1, chloroplastic/amyloplastic (641 aa).

Residues 1–113 constitute a chloroplast transit peptide; that stretch reads MATAAGMGIG…DSIDKTIFVA (113 aa). A disordered region spans residues 62 to 96; that stretch reads TFLVPTSTPPAPTQSPAPAPTPPPLPDSGVGEIEP. The segment covering 68 to 87 has biased composition (pro residues); that stretch reads STPPAPTQSPAPAPTPPPLP. Lys-147 contacts ADP-alpha-D-glucose.

Belongs to the glycosyltransferase 1 family. Bacterial/plant glycogen synthase subfamily.

The protein localises to the plastid. It localises to the chloroplast. It is found in the amyloplast. The catalysed reaction is [(1-&gt;4)-alpha-D-glucosyl](n) + ADP-alpha-D-glucose = [(1-&gt;4)-alpha-D-glucosyl](n+1) + ADP + H(+). It participates in glycan biosynthesis; starch biosynthesis. The chain is Soluble starch synthase 1, chloroplastic/amyloplastic from Oryza sativa subsp. indica (Rice).